The sequence spans 387 residues: Killer cell lectin-like receptor subfamily G member 2 (387 aa).

The tract at residues 1-105 (MEPPQVPAEA…SGEPAPASWA (105 aa)) is disordered. Basic and acidic residues predominate over residues 15–27 (ASEDSPRPERTGW). Serine 143 carries the phosphoserine modification. A disordered region spans residues 155–174 (QWLPRAPSPGSTWSRGSPLA). The helical transmembrane segment at 241-261 (WALVVMAVLLAVCTVAVVALA) threads the bilayer. Residues 278–383 (SQEQCYYLSE…CSSPRPWVCA (106 aa)) form the C-type lectin domain. Disulfide bonds link cysteine 299–cysteine 382 and cysteine 361–cysteine 374.

It is found in the membrane. This chain is Killer cell lectin-like receptor subfamily G member 2 (Klrg2), found in Mus musculus (Mouse).